The sequence spans 481 residues: Glutamyl-tRNA(Gln) amidotransferase subunit A (481 aa).

Residues Lys-74 and Ser-149 each act as charge relay system in the active site. Residue Ser-173 is the Acyl-ester intermediate of the active site.

The protein belongs to the amidase family. GatA subfamily. As to quaternary structure, heterotrimer of A, B and C subunits.

It catalyses the reaction L-glutamyl-tRNA(Gln) + L-glutamine + ATP + H2O = L-glutaminyl-tRNA(Gln) + L-glutamate + ADP + phosphate + H(+). Allows the formation of correctly charged Gln-tRNA(Gln) through the transamidation of misacylated Glu-tRNA(Gln) in organisms which lack glutaminyl-tRNA synthetase. The reaction takes place in the presence of glutamine and ATP through an activated gamma-phospho-Glu-tRNA(Gln). The protein is Glutamyl-tRNA(Gln) amidotransferase subunit A of Francisella tularensis subsp. novicida (strain U112).